The primary structure comprises 484 residues: BPI fold-containing family B member 1 (484 aa).

The signal sequence occupies residues methionine 1 to alanine 21. Asparagine 48 is a glycosylation site (N-linked (GlcNAc...) asparagine). A disulfide bond links cysteine 158 and cysteine 201. 2 N-linked (GlcNAc...) asparagine glycosylation sites follow: asparagine 264 and asparagine 401.

This sequence belongs to the BPI/LBP/Plunc superfamily. Plunc family. Detected in duodenum mucosal crypts of cholera patients, near Paneth cells (at protein level). Detected in trachea, nasal septal epithelium and lung.

Its subcellular location is the secreted. In terms of biological role, may play a role in innate immunity in mouth, nose and lungs. Binds bacterial lipopolysaccharide (LPS) and modulates the cellular responses to LPS. This is BPI fold-containing family B member 1 (BPIFB1) from Homo sapiens (Human).